The following is an 847-amino-acid chain: Acyl-homoserine lactone acylase QuiP (847 aa).

Positions 1-26 are cleaved as a signal peptide; it reads MASPAFMRFLPRCGAAAAFGTLLGLA. The active-site Nucleophile is the Ser-265.

The protein belongs to the peptidase S45 family. As to quaternary structure, heterodimer of an alpha subunit and a beta subunit processed from the same precursor.

Its subcellular location is the periplasm. The enzyme catalyses an N-acyl-L-homoserine lactone + H2O = L-homoserine lactone + a carboxylate. Its function is as follows. Catalyzes the deacylation of acyl-homoserine lactone (AHL or acyl-HSL), releasing homoserine lactone (HSL) and the corresponding fatty acid. Possesses a specificity for the degradation of long-chain acyl-HSLs (side chains of seven or more carbons in length). Appears to be the acyl-HSL acylase that underlies the ability of P.aeruginosa to degrade and utilize certain acyl-HSLs as growth nutrients, including one of its own quorum signals, 3-oxo-C12-HSL. Is thought to have a role in quorum quenching. The chain is Acyl-homoserine lactone acylase QuiP (quiP) from Pseudomonas aeruginosa (strain ATCC 15692 / DSM 22644 / CIP 104116 / JCM 14847 / LMG 12228 / 1C / PRS 101 / PAO1).